A 613-amino-acid polypeptide reads, in one-letter code: Isocitrate dehydrogenase kinase/phosphatase (613 aa).

Residues 328–334 (APGIRGL) and K349 contribute to the ATP site. D384 is a catalytic residue.

Belongs to the AceK family.

The protein localises to the cytoplasm. It carries out the reaction L-seryl-[isocitrate dehydrogenase] + ATP = O-phospho-L-seryl-[isocitrate dehydrogenase] + ADP + H(+). Bifunctional enzyme which can phosphorylate or dephosphorylate isocitrate dehydrogenase (IDH) on a specific serine residue. This is a regulatory mechanism which enables bacteria to bypass the Krebs cycle via the glyoxylate shunt in response to the source of carbon. When bacteria are grown on glucose, IDH is fully active and unphosphorylated, but when grown on acetate or ethanol, the activity of IDH declines drastically concomitant with its phosphorylation. In Cupriavidus necator (strain ATCC 17699 / DSM 428 / KCTC 22496 / NCIMB 10442 / H16 / Stanier 337) (Ralstonia eutropha), this protein is Isocitrate dehydrogenase kinase/phosphatase.